Consider the following 290-residue polypeptide: Iron-sulfur cluster carrier protein (290 aa).

47-54 (GKGGVGKS) is an ATP binding site.

Belongs to the Mrp/NBP35 ATP-binding proteins family. Homodimer.

In terms of biological role, binds and transfers iron-sulfur (Fe-S) clusters to target apoproteins. Can hydrolyze ATP. This Methanocaldococcus jannaschii (strain ATCC 43067 / DSM 2661 / JAL-1 / JCM 10045 / NBRC 100440) (Methanococcus jannaschii) protein is Iron-sulfur cluster carrier protein.